A 144-amino-acid chain; its full sequence is MLLPKRVKYRRQHRPKTTGRSKGGNYVTFGEYGLQATTTSWITSRQIESARIAMTRFMKRGGKVWIKIFPHTPYTQKPLEVRMGAGKGAVEGWIAVAKPGRILFEIAGVNEEVAREALRLASHKLPVKTKFVKREELGGETNES.

Positions 1 to 19 are enriched in basic residues; that stretch reads MLLPKRVKYRRQHRPKTTG. The tract at residues 1–23 is disordered; sequence MLLPKRVKYRRQHRPKTTGRSKG.

It belongs to the universal ribosomal protein uL16 family. Part of the 50S ribosomal subunit.

Its function is as follows. Binds 23S rRNA and is also seen to make contacts with the A and possibly P site tRNAs. The chain is Large ribosomal subunit protein uL16 from Staphylococcus saprophyticus subsp. saprophyticus (strain ATCC 15305 / DSM 20229 / NCIMB 8711 / NCTC 7292 / S-41).